The primary structure comprises 443 residues: CBL-interacting protein kinase 29 (443 aa).

Positions 32–292 constitute a Protein kinase domain; the sequence is YELGGLLGRG…TEEIITHPWF (261 aa). ATP contacts are provided by residues 38–46 and Lys61; that span reads LGRGASAKV. Catalysis depends on Asp164, which acts as the Proton acceptor. An activation loop region spans residues 182-207; sequence DFGLGAVADGALHHTLCGTPAYVAPE. Residues 313-347 enclose the NAF domain; sequence AKFKTEFKEDDMARDMTAFDILACSPGSDLSGLFG. A PPI region spans residues 350–379; it reads PGKERVFVGEPAAAVLSRVEEAGKKEGYMV.

This sequence belongs to the protein kinase superfamily. CAMK Ser/Thr protein kinase family. SNF1 subfamily. Mn(2+) is required as a cofactor.

The catalysed reaction is L-seryl-[protein] + ATP = O-phospho-L-seryl-[protein] + ADP + H(+). It carries out the reaction L-threonyl-[protein] + ATP = O-phospho-L-threonyl-[protein] + ADP + H(+). Its function is as follows. CIPK serine-threonine protein kinases interact with CBL proteins. Binding of a CBL protein to the regulatory NAF domain of CIPK protein lead to the activation of the kinase in a calcium-dependent manner. This is CBL-interacting protein kinase 29 (CIPK29) from Oryza sativa subsp. japonica (Rice).